The sequence spans 276 residues: MLLRFTKMHGLGNDFMVLDLVSQHAHILPKHAKQWGDRHTGIGFDQLLIVEAPNNPDVDFRYRIFNADGSEVEQCGNGARCFARFVLDKRLTAKRQIRVETKSGIIELDVRSDGQIGVNMGAPRLVPADIPFQAPAQALSYQVDVDGATVELAAVSMGNPHAVLRVADINSAPVHELGPKIEHHPRFPARVNVGFLQVIDRHRAQLRVWERGAGETQACGTGACAAAVAAISQGWMDSPLLIDLPGGRLSIEWAGPGQPVMMTGPAVRVYEGQVRL.

N13, Q46, and N66 together coordinate substrate. The Proton donor role is filled by C75. Substrate contacts are provided by residues 76–77 (GN), N159, N192, and 210–211 (ER). C219 acts as the Proton acceptor in catalysis. 220–221 (GT) contacts substrate.

It belongs to the diaminopimelate epimerase family. As to quaternary structure, homodimer.

It is found in the cytoplasm. The enzyme catalyses (2S,6S)-2,6-diaminopimelate = meso-2,6-diaminopimelate. It participates in amino-acid biosynthesis; L-lysine biosynthesis via DAP pathway; DL-2,6-diaminopimelate from LL-2,6-diaminopimelate: step 1/1. Catalyzes the stereoinversion of LL-2,6-diaminopimelate (L,L-DAP) to meso-diaminopimelate (meso-DAP), a precursor of L-lysine and an essential component of the bacterial peptidoglycan. The chain is Diaminopimelate epimerase from Pseudomonas fluorescens.